Consider the following 802-residue polypeptide: Outer membrane usher protein PefC (802 aa).

Residues 1–24 form the signal peptide; it reads MSFHHRVFKLSALSLALFSHLSFA. C782 and C801 form a disulfide bridge.

The protein belongs to the fimbrial export usher family.

The protein resides in the cell outer membrane. Involved in the export and assembly of FimA fimbrial subunits across the outer membrane. The sequence is that of Outer membrane usher protein PefC (pefC) from Salmonella typhimurium (strain LT2 / SGSC1412 / ATCC 700720).